The chain runs to 238 residues: Tetraspanin-4 (238 aa).

At methionine 1–methionine 13 the chain is on the cytoplasmic side. Residues phenylalanine 14–leucine 34 traverse the membrane as a helical segment. Over alanine 35–asparagine 55 the chain is Extracellular. Residues leucine 56 to isoleucine 76 form a helical membrane-spanning segment. At lysine 77–threonine 85 the chain is on the cytoplasmic side. A helical transmembrane segment spans residues phenylalanine 86–alanine 106. Over tyrosine 107 to asparagine 201 the chain is Extracellular. N-linked (GlcNAc...) asparagine glycans are attached at residues asparagine 152 and asparagine 161. A helical transmembrane segment spans residues leucine 202 to phenylalanine 222. Residues alanine 223–alanine 238 lie on the Cytoplasmic side of the membrane.

Belongs to the tetraspanin (TM4SF) family. In terms of assembly, forms a complex with integrins.

The protein localises to the membrane. The polypeptide is Tetraspanin-4 (TSPAN4) (Pongo abelii (Sumatran orangutan)).